We begin with the raw amino-acid sequence, 120 residues long: NAD(P)H-quinone oxidoreductase subunit 3, chloroplastic (120 aa).

3 consecutive transmembrane segments (helical) span residues 2–22 (FLLYEYDIFWAFLIISSVIPI), 64–84 (MFALVFVVFDVETIFLYPWAL), and 88–108 (ILGVSVFIEALIFVLILVLGL).

It belongs to the complex I subunit 3 family. In terms of assembly, NDH is composed of at least 16 different subunits, 5 of which are encoded in the nucleus.

The protein resides in the plastid. Its subcellular location is the chloroplast thylakoid membrane. It catalyses the reaction a plastoquinone + NADH + (n+1) H(+)(in) = a plastoquinol + NAD(+) + n H(+)(out). The catalysed reaction is a plastoquinone + NADPH + (n+1) H(+)(in) = a plastoquinol + NADP(+) + n H(+)(out). NDH shuttles electrons from NAD(P)H:plastoquinone, via FMN and iron-sulfur (Fe-S) centers, to quinones in the photosynthetic chain and possibly in a chloroplast respiratory chain. The immediate electron acceptor for the enzyme in this species is believed to be plastoquinone. Couples the redox reaction to proton translocation, and thus conserves the redox energy in a proton gradient. This is NAD(P)H-quinone oxidoreductase subunit 3, chloroplastic from Oenothera argillicola (Appalachian evening primrose).